The chain runs to 322 residues: Probable heme-iron transport system permease protein IsdF (322 aa).

The next 9 membrane-spanning stretches (helical) occupy residues 9-29, 61-81, 89-109, 114-134, 143-163, 179-199, 233-253, 267-287, and 294-314; these read LLFLCLLVILIATAYISFVTG, ILIALMVGAMLAVSGALLQAA, ANIIGVSSGALIMRALCMLFI, FYLPLLSFIGGLIPFLIIIVL, VSMILVGVALFVLLNGVLEIL, IWSDVYILAVSALLGLILTLL, VFLASATVAIVGQLAFLGIIV, VLIPFSTVIGAWLLLVADLLG, and LEIPANAILMIVGGPMLIYLI.

This sequence belongs to the binding-protein-dependent transport system permease family. FecCD subfamily.

Its subcellular location is the cell membrane. Functionally, part of the binding-protein-dependent transport system for heme-iron. Responsible for the translocation of the substrate across the membrane. The sequence is that of Probable heme-iron transport system permease protein IsdF (isdF) from Staphylococcus aureus (strain bovine RF122 / ET3-1).